The sequence spans 124 residues: Large ribosomal subunit protein bL12 (124 aa).

It belongs to the bacterial ribosomal protein bL12 family. Homodimer. Part of the ribosomal stalk of the 50S ribosomal subunit. Forms a multimeric L10(L12)X complex, where L10 forms an elongated spine to which 2 to 4 L12 dimers bind in a sequential fashion. Binds GTP-bound translation factors.

Functionally, forms part of the ribosomal stalk which helps the ribosome interact with GTP-bound translation factors. Is thus essential for accurate translation. This chain is Large ribosomal subunit protein bL12, found in Desulforamulus reducens (strain ATCC BAA-1160 / DSM 100696 / MI-1) (Desulfotomaculum reducens).